Reading from the N-terminus, the 44-residue chain is Large ribosomal subunit protein bL34 (44 aa).

Positions 1–26 (MKMTFQPKKRQRAKVHGFRQRMKTAG) are disordered. Basic residues predominate over residues 7–22 (PKKRQRAKVHGFRQRM).

It belongs to the bacterial ribosomal protein bL34 family.

In Agathobacter rectalis (strain ATCC 33656 / DSM 3377 / JCM 17463 / KCTC 5835 / VPI 0990) (Eubacterium rectale), this protein is Large ribosomal subunit protein bL34.